The primary structure comprises 170 residues: Small ribosomal subunit protein uS13 (170 aa).

A compositionally biased stretch (basic residues) spans 128–140 (VRHKRGQKVRGQR). Positions 128 to 170 (VRHKRGQKVRGQRTKSTGRTEGTIGVNVEAIKEEQAEDGGDEE) are disordered.

This sequence belongs to the universal ribosomal protein uS13 family. Part of the 30S ribosomal subunit. Forms a loose heterodimer with protein S19. Forms two bridges to the 50S subunit in the 70S ribosome.

Located at the top of the head of the 30S subunit, it contacts several helices of the 16S rRNA. In the 70S ribosome it contacts the 23S rRNA (bridge B1a) and protein L5 of the 50S subunit (bridge B1b), connecting the 2 subunits; these bridges are implicated in subunit movement. In Natronomonas pharaonis (strain ATCC 35678 / DSM 2160 / CIP 103997 / JCM 8858 / NBRC 14720 / NCIMB 2260 / Gabara) (Halobacterium pharaonis), this protein is Small ribosomal subunit protein uS13.